Here is a 483-residue protein sequence, read N- to C-terminus: 6-phosphogluconate dehydrogenase, decarboxylating (483 aa).

NADP(+) is bound by residues glycine 10 to glycine 15 and asparagine 33 to threonine 35. Lysine 38 is subject to N6-acetyllysine. Residue serine 57 is modified to Phosphoserine. At lysine 59 the chain carries N6-acetyllysine. Residues valine 75–alanine 77 and asparagine 103 contribute to the NADP(+) site. Residues asparagine 103 and serine 129–glycine 131 contribute to the substrate site. Serine 129 carries the phosphoserine modification. Lysine 184 serves as the catalytic Proton acceptor. Histidine 187–asparagine 188 contacts substrate. Glutamate 191 acts as the Proton donor in catalysis. Substrate contacts are provided by tyrosine 192, lysine 261, arginine 288, arginine 447, and histidine 453. Residue serine 478–tyrosine 481 coordinates NADP(+).

It belongs to the 6-phosphogluconate dehydrogenase family. As to quaternary structure, homodimer.

It localises to the cytoplasm. It catalyses the reaction 6-phospho-D-gluconate + NADP(+) = D-ribulose 5-phosphate + CO2 + NADPH. It functions in the pathway carbohydrate degradation; pentose phosphate pathway; D-ribulose 5-phosphate from D-glucose 6-phosphate (oxidative stage): step 3/3. In terms of biological role, catalyzes the oxidative decarboxylation of 6-phosphogluconate to ribulose 5-phosphate and CO(2), with concomitant reduction of NADP to NADPH. The sequence is that of 6-phosphogluconate dehydrogenase, decarboxylating from Rattus norvegicus (Rat).